The sequence spans 924 residues: Exocyst complex component 2 (924 aa).

The IPT/TIG domain maps to 8–93 (PLVTGISPNE…GTSTVSFKLL (86 aa)). Positions 240-260 (QKLENVLNRASNTADTLFQEV) form a coiled coil. Phosphoserine occurs at positions 431, 432, and 435. T440 carries the post-translational modification Phosphothreonine. K454 carries the N6-acetyllysine modification. S888 is subject to Phosphoserine.

This sequence belongs to the SEC5 family. In terms of assembly, the exocyst complex is composed of EXOC1, EXOC2, EXOC3, EXOC4, EXOC5, EXOC6, EXOC7 and EXOC8. Interacts with EXOC3L1. Interacts with GNEFR/DELGEF; this interaction occurs only in the presence of magnesium or manganese and is stimulated by dCTP or GTP. Interacts with RALA and RALB. Interacts with ARL13B; regulates ARL13B localization to the cilium membrane. Widely expressed with highest levels in brain and placenta.

It is found in the midbody. The protein localises to the midbody ring. Its function is as follows. Component of the exocyst complex involved in the docking of exocytic vesicles with fusion sites on the plasma membrane. The protein is Exocyst complex component 2 (EXOC2) of Homo sapiens (Human).